The following is a 474-amino-acid chain: Crocetin glucosyltransferase, chloroplastic (474 aa).

Residues methionine 1 to serine 45 constitute a chloroplast transit peptide. Residue histidine 17 is the Proton acceptor of the active site. Histidine 17 is a binding site for an anthocyanidin. 8 residues coordinate UDP-alpha-D-glucose: glutamine 346, histidine 361, tryptophan 364, asparagine 365, serine 366, glutamate 369, aspartate 385, and glutamine 386.

The protein belongs to the UDP-glycosyltransferase family. As to expression, ubiquitous.

It is found in the plastid. Its subcellular location is the chloroplast. The catalysed reaction is crocetin + UDP-alpha-D-glucose = beta-D-glucosyl crocetin + UDP. The enzyme catalyses beta-D-glucosyl crocetin + UDP-alpha-D-glucose = bis(beta-D-glucosyl) crocetin + UDP. It catalyses the reaction beta-D-gentiobiosyl crocetin + UDP-alpha-D-glucose = beta-D-gentiobiosyl beta-D-glucosyl crocetin + UDP. In terms of biological role, glucosyltransferase acting on a broad range of substrates, including crocetin, 4-coumaric acid, caffeic acid and ferulic acid. No activity with indol-3-acetic acid, bixin and norbixin, and no formation of O-glucosides. Involved with UGT94E5 in sequential glycosylation of crocetin to crocin (bis(beta-D-gentiobiosyl) crocetin). The chain is Crocetin glucosyltransferase, chloroplastic (UGT75L6) from Gardenia jasminoides (Cape jasmine).